Reading from the N-terminus, the 453-residue chain is Bifunctional protein GlmU (453 aa).

The interval 1–228 (MPHWAAVIMA…VHEALGINSR (228 aa)) is pyrophosphorylase. UDP-N-acetyl-alpha-D-glucosamine contacts are provided by residues Lys23, Gln73, 78 to 79 (GT), 100 to 102 (SGD), Gly139, Glu153, Asn168, and Asn226. Asp102 is a binding site for Mg(2+). Asn226 serves as a coordination point for Mg(2+). A linker region spans residues 229–249 (AQLAAAEDVARQRILSYWMEE). Residues 250-453 (GVTIIDPRST…IENWVRNKKK (204 aa)) are N-acetyltransferase. UDP-N-acetyl-alpha-D-glucosamine contacts are provided by Arg331 and Lys349. The active-site Proton acceptor is His361. 2 residues coordinate UDP-N-acetyl-alpha-D-glucosamine: Tyr364 and Asn375. Residues Ala378, 384-385 (NY), Ser403, Ala421, and Arg438 each bind acetyl-CoA.

In the N-terminal section; belongs to the N-acetylglucosamine-1-phosphate uridyltransferase family. The protein in the C-terminal section; belongs to the transferase hexapeptide repeat family. As to quaternary structure, homotrimer. The cofactor is Mg(2+).

The protein resides in the cytoplasm. It carries out the reaction alpha-D-glucosamine 1-phosphate + acetyl-CoA = N-acetyl-alpha-D-glucosamine 1-phosphate + CoA + H(+). The enzyme catalyses N-acetyl-alpha-D-glucosamine 1-phosphate + UTP + H(+) = UDP-N-acetyl-alpha-D-glucosamine + diphosphate. It functions in the pathway nucleotide-sugar biosynthesis; UDP-N-acetyl-alpha-D-glucosamine biosynthesis; N-acetyl-alpha-D-glucosamine 1-phosphate from alpha-D-glucosamine 6-phosphate (route II): step 2/2. The protein operates within nucleotide-sugar biosynthesis; UDP-N-acetyl-alpha-D-glucosamine biosynthesis; UDP-N-acetyl-alpha-D-glucosamine from N-acetyl-alpha-D-glucosamine 1-phosphate: step 1/1. Its pathway is bacterial outer membrane biogenesis; LPS lipid A biosynthesis. Functionally, catalyzes the last two sequential reactions in the de novo biosynthetic pathway for UDP-N-acetylglucosamine (UDP-GlcNAc). The C-terminal domain catalyzes the transfer of acetyl group from acetyl coenzyme A to glucosamine-1-phosphate (GlcN-1-P) to produce N-acetylglucosamine-1-phosphate (GlcNAc-1-P), which is converted into UDP-GlcNAc by the transfer of uridine 5-monophosphate (from uridine 5-triphosphate), a reaction catalyzed by the N-terminal domain. This is Bifunctional protein GlmU from Desulfitobacterium hafniense (strain DSM 10664 / DCB-2).